The primary structure comprises 291 residues: Putative carboxymethylenebutenolidase (291 aa).

The signal sequence occupies residues 1 to 40 (MTAFDADLRSLAAQTTLSRRTVIATSLATGFALAVQPVAA). Residues C170, D227, and H259 contribute to the active site.

Belongs to the dienelactone hydrolase family.

It carries out the reaction 2-(5-oxo-2,5-dihydrofuran-2-ylidene)acetate + H2O = 4-oxohex-2-enedioate + H(+). The sequence is that of Putative carboxymethylenebutenolidase from Methylorubrum extorquens (strain ATCC 14718 / DSM 1338 / JCM 2805 / NCIMB 9133 / AM1) (Methylobacterium extorquens).